The primary structure comprises 303 residues: Probable endonuclease 4 (303 aa).

Residues histidine 75, histidine 115, glutamate 151, aspartate 185, histidine 188, histidine 221, aspartate 234, histidine 236, and glutamate 266 each coordinate Zn(2+).

The protein belongs to the AP endonuclease 2 family. Requires Zn(2+) as cofactor.

It carries out the reaction Endonucleolytic cleavage to 5'-phosphooligonucleotide end-products.. Functionally, endonuclease IV plays a role in DNA repair. It cleaves phosphodiester bonds at apurinic or apyrimidinic (AP) sites, generating a 3'-hydroxyl group and a 5'-terminal sugar phosphate. This chain is Probable endonuclease 4, found in Ureaplasma parvum serovar 3 (strain ATCC 700970).